The primary structure comprises 283 residues: Phospholipid phosphatase 1 (283 aa).

The Cytoplasmic portion of the chain corresponds to 1-6 (MFDKTR). Residues 5–7 (TRL) carry the PDZ-binding; involved in localization to the apical cell membrane motif. Residues 7–27 (LPYVALDVICVLLAGLPFAIL) form a helical membrane-spanning segment. Topologically, residues 28–53 (TSRHTPFQRGIFCNDDSIKYPYKEDT) are extracellular. Residues 54 to 74 (IPYALLGGIVIPFCIIVMSIG) form a helical membrane-spanning segment. Residues 75–88 (ESLSVYFNVLHSNS) are Cytoplasmic-facing. Residues 89 to 109 (FVGNPYIATIYKAVGAFLFGV) form a helical membrane-spanning segment. Residues 110-164 (SASQSLTDIAKYTIGSLRPHFLAICNPDWSKINCSDGYIEDYICQGNEEKVKEGR) lie on the Extracellular side of the membrane. The segment at 120–128 (KYTIGSLRP) is phosphatase sequence motif I. Asn142 is a glycosylation site (N-linked (GlcNAc...) asparagine). A helical transmembrane segment spans residues 165 to 185 (LSFYSGHSSFSMYCMLFVALY). Residues 168–171 (YSGH) form a phosphatase sequence motif II region. His171 acts as the Proton donors in catalysis. Topologically, residues 186 to 199 (LQARMKGDWARLLR) are cytoplasmic. A helical transmembrane segment spans residues 200 to 220 (PMLQFGLIAFSIYVGLSRVSD). The segment at 216-227 (SRVSDYKHHWSD) is phosphatase sequence motif III. The Extracellular portion of the chain corresponds to 221-229 (YKHHWSDVT). His223 serves as the catalytic Nucleophile. A helical membrane pass occupies residues 230–250 (VGLIQGAAMAILVALYVSDFF). Residues 251–283 (KDTHSYKERKEEDPHTTLHETASSRNYSTNHEP) lie on the Cytoplasmic side of the membrane. The segment at 260-283 (KEEDPHTTLHETASSRNYSTNHEP) is disordered. The span at 269-283 (HETASSRNYSTNHEP) shows a compositional bias: polar residues.

This sequence belongs to the PA-phosphatase related phosphoesterase family. Forms functional homodimers and homooligomers that are not required for substrate recognition and catalytic activity. Can also form heterooligomers with PLPP2 and PLPP3. N-glycosylated. N-linked sugars are of the complex type. N-glycosylation is not required for the phosphatase activity. Widely expressed. Highly expressed in kidney and lung. Almost undetectable in brain, heart, bone, muscle or spleen.

Its subcellular location is the cell membrane. It is found in the apical cell membrane. It localises to the membrane raft. The protein resides in the membrane. The protein localises to the caveola. The catalysed reaction is a 1,2-diacyl-sn-glycero-3-phosphate + H2O = a 1,2-diacyl-sn-glycerol + phosphate. It catalyses the reaction 1,2-dihexadecanoyl-sn-glycero-3-phosphate + H2O = 1,2-dihexadecanoyl-sn-glycerol + phosphate. It carries out the reaction 1,2-di-(9Z-octadecenoyl)-sn-glycero-3-phosphate + H2O = 1,2-di-(9Z-octadecenoyl)-sn-glycerol + phosphate. The enzyme catalyses a monoacyl-sn-glycero-3-phosphate + H2O = a monoacylglycerol + phosphate. The catalysed reaction is (9Z)-octadecenoyl-sn-glycero-3-phosphate + H2O = (9Z-octadecenoyl)-glycerol + phosphate. It catalyses the reaction a 1-acyl-sn-glycero-3-phosphate + H2O = a 1-acyl-sn-glycerol + phosphate. It carries out the reaction 1-(9Z-octadecenoyl)-sn-glycero-3-phosphate + H2O = 1-(9Z-octadecenoyl)-sn-glycerol + phosphate. The enzyme catalyses a 1,2-diacyl-sn-glycerol 3-diphosphate + H2O = a 1,2-diacyl-sn-glycero-3-phosphate + phosphate + H(+). The catalysed reaction is sphing-4-enine 1-phosphate + H2O = sphing-4-enine + phosphate. It catalyses the reaction an N-acylsphing-4-enine 1-phosphate + H2O = an N-acylsphing-4-enine + phosphate. It carries out the reaction N-(octanoyl)-sphing-4-enine-1-phosphate + H2O = N-octanoylsphing-4-enine + phosphate. The enzyme catalyses N-(9Z-octadecenoyl)-ethanolamine phosphate + H2O = N-(9Z-octadecenoyl) ethanolamine + phosphate. The catalysed reaction is 1-hexadecanoyl-2-(9Z-octadecenoyl)-sn-glycero-3-phosphate + H2O = 1-hexadecanoyl-2-(9Z-octadecenoyl)-sn-glycerol + phosphate. It functions in the pathway lipid metabolism; phospholipid metabolism. With respect to regulation, magnesium-independent phospholipid phosphatase. Insensitive to N-ethylmaleimide. Functionally, magnesium-independent phospholipid phosphatase of the plasma membrane that catalyzes the dephosphorylation of a variety of glycerolipid and sphingolipid phosphate esters including phosphatidate/PA, lysophosphatidate/LPA, diacylglycerol pyrophosphate/DGPP, sphingosine 1-phosphate/S1P and ceramide 1-phosphate/C1P. Also acts on N-oleoyl ethanolamine phosphate/N-(9Z-octadecenoyl)-ethanolamine phosphate, a potential physiological compound. Through its extracellular phosphatase activity allows both the hydrolysis and the cellular uptake of these bioactive lipid mediators from the milieu, regulating signal transduction in different cellular processes. It is for instance essential for the extracellular hydrolysis of S1P and subsequent conversion into intracellular S1P. Involved in the regulation of inflammation, platelets activation, cell proliferation and migration among other processes. May also have an intracellular activity to regulate phospholipid-mediated signaling pathways. The chain is Phospholipid phosphatase 1 from Mus musculus (Mouse).